Here is a 476-residue protein sequence, read N- to C-terminus: Bifunctional protein HldE (476 aa).

The segment at 1–318 (MKPTLPNYDQ…AEAIHGSQDS (318 aa)) is ribokinase. Position 195-198 (195-198 (NMLE)) interacts with ATP. The active site involves D264. Residues 344–476 (MTNGCFDILH…IIEAIKGGRG (133 aa)) are cytidylyltransferase.

In the N-terminal section; belongs to the carbohydrate kinase PfkB family. This sequence in the C-terminal section; belongs to the cytidylyltransferase family. As to quaternary structure, homodimer.

It carries out the reaction D-glycero-beta-D-manno-heptose 7-phosphate + ATP = D-glycero-beta-D-manno-heptose 1,7-bisphosphate + ADP + H(+). The enzyme catalyses D-glycero-beta-D-manno-heptose 1-phosphate + ATP + H(+) = ADP-D-glycero-beta-D-manno-heptose + diphosphate. Its pathway is nucleotide-sugar biosynthesis; ADP-L-glycero-beta-D-manno-heptose biosynthesis; ADP-L-glycero-beta-D-manno-heptose from D-glycero-beta-D-manno-heptose 7-phosphate: step 1/4. It participates in nucleotide-sugar biosynthesis; ADP-L-glycero-beta-D-manno-heptose biosynthesis; ADP-L-glycero-beta-D-manno-heptose from D-glycero-beta-D-manno-heptose 7-phosphate: step 3/4. Catalyzes the phosphorylation of D-glycero-D-manno-heptose 7-phosphate at the C-1 position to selectively form D-glycero-beta-D-manno-heptose-1,7-bisphosphate. Its function is as follows. Catalyzes the ADP transfer from ATP to D-glycero-beta-D-manno-heptose 1-phosphate, yielding ADP-D-glycero-beta-D-manno-heptose. The sequence is that of Bifunctional protein HldE from Aliivibrio salmonicida (strain LFI1238) (Vibrio salmonicida (strain LFI1238)).